Reading from the N-terminus, the 478-residue chain is Serine hydroxymethyltransferase (478 aa).

(6S)-5,6,7,8-tetrahydrofolate-binding positions include Leu-161 and 165–167 (GHL). Lys-273 carries the post-translational modification N6-(pyridoxal phosphate)lysine. Glu-291 contributes to the (6S)-5,6,7,8-tetrahydrofolate binding site.

It belongs to the SHMT family. In terms of assembly, homodimer. It depends on pyridoxal 5'-phosphate as a cofactor.

It localises to the cytoplasm. The catalysed reaction is (6R)-5,10-methylene-5,6,7,8-tetrahydrofolate + glycine + H2O = (6S)-5,6,7,8-tetrahydrofolate + L-serine. It participates in one-carbon metabolism; tetrahydrofolate interconversion. Its pathway is amino-acid biosynthesis; glycine biosynthesis; glycine from L-serine: step 1/1. Its function is as follows. Catalyzes the reversible interconversion of serine and glycine with tetrahydrofolate (THF) serving as the one-carbon carrier. This reaction serves as the major source of one-carbon groups required for the biosynthesis of purines, thymidylate, methionine, and other important biomolecules. Also exhibits THF-independent aldolase activity toward beta-hydroxyamino acids, producing glycine and aldehydes, via a retro-aldol mechanism. The chain is Serine hydroxymethyltransferase from Salinispora tropica (strain ATCC BAA-916 / DSM 44818 / JCM 13857 / NBRC 105044 / CNB-440).